Consider the following 302-residue polypeptide: Alpha-N-acetyl-neuraminyl-2,3-beta-galactosyl-1,3-N-acetyl-galactosaminide alpha-2,6-sialyltransferase (302 aa).

The Cytoplasmic portion of the chain corresponds to 1-6 (MKAPGR). A helical; Signal-anchor for type II membrane protein transmembrane segment spans residues 7 to 27 (LVLIILCSVVFSAVYILLCCW). Residues 28–302 (AGLPLCLATC…VFAHPSWRTE (275 aa)) are Lumenal-facing. Cysteines 76 and 225 form a disulfide. The N-linked (GlcNAc...) asparagine glycan is linked to Asn135.

Belongs to the glycosyltransferase 29 family. As to expression, ubiquitous.

It localises to the golgi apparatus membrane. It catalyses the reaction an alpha-Neu5Ac-(2-&gt;3)-beta-D-Gal-(1-&gt;3)-D-GlcNAc derivative + CMP-N-acetyl-beta-neuraminate = an alpha-Neu5Ac-(2-&gt;3)-beta-D-Gal-(1-&gt;3)-[alpha-Neu5Ac-(2-&gt;6)]-D-GlcNAc derivative + CMP + H(+). The catalysed reaction is N-acetyl-alpha-neuraminosyl-(2-&gt;3)-beta-D-galactosyl-(1-&gt;3)-N-acetyl-D-galactosamine + CMP-N-acetyl-beta-neuraminate = N-acetyl-alpha-neuraminosyl-(2-&gt;3)-beta-D-galactosyl-(1-&gt;3)-[N-acetyl-alpha-neuraminosyl-(2-&gt;6)]-N-acetyl-D-galactosamine + CMP + H(+). It carries out the reaction a ganglioside GM1b (d18:1(4E)) + CMP-N-acetyl-beta-neuraminate = a ganglioside GD1alpha (d18:1(4E)) + CMP + H(+). The enzyme catalyses 3-O-[alpha-Neu5Ac-(2-&gt;3)-beta-D-Gal-(1-&gt;3)-alpha-D-GalNAc]-L-Ser-[protein] + CMP-N-acetyl-beta-neuraminate = a 3-O-{alpha-Neu5Ac-(2-&gt;3)-beta-D-Gal-(1-&gt;3)-[alpha-Neu5Ac-(2-&gt;6)]-alpha-D-GalNAc}-L-seryl-[protein] + CMP + H(+). It catalyses the reaction 3-O-[alpha-Neu5Ac-(2-&gt;3)-beta-D-Gal-(1-&gt;3)-alpha-D-GalNAc]-L-Thr-[protein] + CMP-N-acetyl-beta-neuraminate = a 3-O-{alpha-Neu5Ac-(2-&gt;3)-beta-D-Gal-(1-&gt;3)-[alpha-Neu5Ac-(2-&gt;6)]-alpha-D-GalNAc}-L-threonyl-[protein] + CMP + H(+). Its pathway is protein modification; protein glycosylation. The protein operates within glycolipid biosynthesis. Transfers the sialyl group (N-acetyl-alpha-neuraminyl or NeuAc) from CMP-NeuAc to the GalNAc residue on the NeuAc-alpha-2,3-Gal-beta-1,3-GalNAc sequence of glycoproteins and glycolipids forming an alpha-2,6-linkage. Produces branched type disialyl structures by transfer of a sialyl group onto a GalNAc residue inside the backbone core chains. Prefers O-glycans to glycoproteins or glycolipids. The protein is Alpha-N-acetyl-neuraminyl-2,3-beta-galactosyl-1,3-N-acetyl-galactosaminide alpha-2,6-sialyltransferase (ST6GALNAC4) of Homo sapiens (Human).